A 275-amino-acid polypeptide reads, in one-letter code: MRRIVVKDFAIGPKEPLVIMSGPCVIESETHCLKAAETLKNMFEKYNVSLIFKSSYDKANRSAYDSFRGPGLEEGLRILERIQKEFGLAVVTDVHSPQEATTAGSVCEIIQIPAFLCRQTDLILAAAQTGAIVSIKKGQFLAPWDMENVIRKMESGGNSNIILVDRGTTFGYNNLISDMRGIPIMQELGYPVCFDATHSVQKPGGLGSKSGGDREFIPILAKAALAAGANCLFIESHPNPSEAKSDAASVMDFKDLDQLLPQFKELYELIQKQGK.

The protein belongs to the KdsA family.

It localises to the cytoplasm. The catalysed reaction is D-arabinose 5-phosphate + phosphoenolpyruvate + H2O = 3-deoxy-alpha-D-manno-2-octulosonate-8-phosphate + phosphate. It participates in carbohydrate biosynthesis; 3-deoxy-D-manno-octulosonate biosynthesis; 3-deoxy-D-manno-octulosonate from D-ribulose 5-phosphate: step 2/3. The protein operates within bacterial outer membrane biogenesis; lipopolysaccharide biosynthesis. This is 2-dehydro-3-deoxyphosphooctonate aldolase from Protochlamydia amoebophila (strain UWE25).